We begin with the raw amino-acid sequence, 464 residues long: Argininosuccinate lyase (464 aa).

Belongs to the lyase 1 family. Argininosuccinate lyase subfamily.

The protein localises to the cytoplasm. The enzyme catalyses 2-(N(omega)-L-arginino)succinate = fumarate + L-arginine. It functions in the pathway amino-acid biosynthesis; L-arginine biosynthesis; L-arginine from L-ornithine and carbamoyl phosphate: step 3/3. This is Argininosuccinate lyase from Pseudomonas syringae pv. syringae (strain B728a).